Reading from the N-terminus, the 732-residue chain is Wall-associated receptor kinase 2 (732 aa).

The first 23 residues, Met1 to Gly23, serve as a signal peptide directing secretion. At Gln24–Trp329 the chain is on the extracellular side. N-linked (GlcNAc...) asparagine glycosylation is found at Asn57, Asn75, Asn111, Asn154, Asn217, and Asn246. One can recognise an EGF-like 1 domain in the interval Gly230 to Gln277. 6 cysteine pairs are disulfide-bonded: Cys234–Cys249, Cys243–Cys260, Cys262–Cys276, Cys282–Cys295, Cys289–Cys304, and Cys306–Cys318. The 42-residue stretch at Asp278 to Thr319 folds into the EGF-like 2; calcium-binding domain. N-linked (GlcNAc...) asparagine glycosylation is present at Asn288. A helical transmembrane segment spans residues Thr330–Leu350. The Cytoplasmic portion of the chain corresponds to Gln351–Arg732. Thr393 is subject to Phosphothreonine. The region spanning Tyr404–Leu677 is the Protein kinase domain. ATP is bound by residues Leu410–Val418 and Lys432. Tyr477 is subject to Phosphotyrosine. Asp529 acts as the Proton acceptor in catalysis. Thr563 and Thr568 each carry phosphothreonine. At Tyr576 the chain carries Phosphotyrosine.

The protein belongs to the protein kinase superfamily. Ser/Thr protein kinase family. As to expression, predominantly expressed in green tissues such as stems and leaves. Detected at organ junctions.

It is found in the membrane. The enzyme catalyses L-seryl-[protein] + ATP = O-phospho-L-seryl-[protein] + ADP + H(+). It catalyses the reaction L-threonyl-[protein] + ATP = O-phospho-L-threonyl-[protein] + ADP + H(+). Serine/threonine-protein kinase that may function as a signaling receptor of extracellular matrix component. Binding to pectin may have significance in the control of cell expansion, morphogenesis and development. This chain is Wall-associated receptor kinase 2 (WAK2), found in Arabidopsis thaliana (Mouse-ear cress).